The sequence spans 556 residues: 2-isopropylmalate synthase (556 aa).

In terms of domain architecture, Pyruvate carboxyltransferase spans 33–307 (PIWLSSDLRD…DPQLDFSDID (275 aa)). 4 residues coordinate Mg(2+): Asp42, His246, His248, and Asn282. The regulatory domain stretch occupies residues 439–556 (ATAPYTLKGH…ALHQAQEAAA (118 aa)).

Belongs to the alpha-IPM synthase/homocitrate synthase family. LeuA type 2 subfamily. As to quaternary structure, homodimer. The cofactor is Mg(2+).

Its subcellular location is the cytoplasm. It carries out the reaction 3-methyl-2-oxobutanoate + acetyl-CoA + H2O = (2S)-2-isopropylmalate + CoA + H(+). It participates in amino-acid biosynthesis; L-leucine biosynthesis; L-leucine from 3-methyl-2-oxobutanoate: step 1/4. In terms of biological role, catalyzes the condensation of the acetyl group of acetyl-CoA with 3-methyl-2-oxobutanoate (2-ketoisovalerate) to form 3-carboxy-3-hydroxy-4-methylpentanoate (2-isopropylmalate). The protein is 2-isopropylmalate synthase of Stutzerimonas stutzeri (strain A1501) (Pseudomonas stutzeri).